Reading from the N-terminus, the 632-residue chain is Spike glycoprotein (632 aa).

Residues 1-17 form the signal peptide; sequence MSHIMNLLVISFVLAGS. Residues asparagine 93, asparagine 385, asparagine 501, asparagine 512, and asparagine 541 are each glycosylated (N-linked (GlcNAc...) asparagine; by host). A helical transmembrane segment spans residues 560–578; the sequence is AVIIVASLAICYIVLSVLW.

The protein belongs to the nucleorhabdovirus glycoprotein family.

It localises to the virion membrane. In terms of biological role, this protein forms spikes on the surface of the virion. It is responsible both for the binding of the virus to susceptible host cells and for inducing the uptake of the virus by the cell. The interaction between the internal components of the virion and the portion of the glycoprotein exposed on the cytoplasmic face of the plasma membrane probably directs envelopment and virus budding. This is Spike glycoprotein (G) from Aphis (Hairy beggarticks).